The primary structure comprises 454 residues: Transcription factor efuD (454 aa).

Residues 4–111 (AKELIRITAR…NYHRAIDSIK (108 aa)) form the HTH TFE/IIEalpha-type domain. The tract at residues 327–454 (LRTDDDGAMD…DEDELEFEDI (128 aa)) is disordered. The span at 353 to 372 (DQDEEEEEEDDDDDEFEDVD) shows a compositional bias: acidic residues. A compositionally biased stretch (polar residues) spans 387–401 (SVSTPATSAQVSSTA). Residues 423 to 437 (APAAAASSQAAAAES) are compositionally biased toward low complexity. The segment covering 442 to 454 (SDEDEDELEFEDI) has biased composition (acidic residues).

This sequence belongs to the TFIIE alpha subunit family.

It is found in the nucleus. Its function is as follows. Transcription factor; part of the gene cluster that mediates the biosynthesis of enfumafungin, a glycosylated fernene-type triterpenoid with potent antifungal activity, mediated by its interaction with beta-1,3-glucan synthase and the fungal cell wall. Is possibly responsible for the transcription regulation of one or more genes within the gene cluster. This chain is Transcription factor efuD, found in Hormonema carpetanum.